The sequence spans 235 residues: Leucyl/phenylalanyl-tRNA--protein transferase (235 aa).

The protein belongs to the L/F-transferase family.

It localises to the cytoplasm. The enzyme catalyses N-terminal L-lysyl-[protein] + L-leucyl-tRNA(Leu) = N-terminal L-leucyl-L-lysyl-[protein] + tRNA(Leu) + H(+). The catalysed reaction is N-terminal L-arginyl-[protein] + L-leucyl-tRNA(Leu) = N-terminal L-leucyl-L-arginyl-[protein] + tRNA(Leu) + H(+). It catalyses the reaction L-phenylalanyl-tRNA(Phe) + an N-terminal L-alpha-aminoacyl-[protein] = an N-terminal L-phenylalanyl-L-alpha-aminoacyl-[protein] + tRNA(Phe). Functionally, functions in the N-end rule pathway of protein degradation where it conjugates Leu, Phe and, less efficiently, Met from aminoacyl-tRNAs to the N-termini of proteins containing an N-terminal arginine or lysine. In Cellvibrio japonicus (strain Ueda107) (Pseudomonas fluorescens subsp. cellulosa), this protein is Leucyl/phenylalanyl-tRNA--protein transferase.